A 252-amino-acid chain; its full sequence is Indole-3-glycerol phosphate synthase (252 aa).

This sequence belongs to the TrpC family.

The catalysed reaction is 1-(2-carboxyphenylamino)-1-deoxy-D-ribulose 5-phosphate + H(+) = (1S,2R)-1-C-(indol-3-yl)glycerol 3-phosphate + CO2 + H2O. The protein operates within amino-acid biosynthesis; L-tryptophan biosynthesis; L-tryptophan from chorismate: step 4/5. The protein is Indole-3-glycerol phosphate synthase of Listeria monocytogenes serotype 4a (strain HCC23).